Here is a 324-residue protein sequence, read N- to C-terminus: N-acetylmuramoyl-L-alanine amidase sle1 (324 aa).

The N-terminal stretch at 1 to 25 is a signal peptide; sequence MQKKYITAIIGTTALSALASTHAQA. LysM domains are found at residues 27–70, 84–127, and 147–190; these read TTHT…VLKV, TVYT…KLKV, and ATYT…KLKV. The Peptidase C51 domain maps to 200-324; it reads SNNTRSNGGY…YQVRNYKFIH (125 aa).

Its subcellular location is the secreted. It localises to the cell surface. The enzyme catalyses Hydrolyzes the link between N-acetylmuramoyl residues and L-amino acid residues in certain cell-wall glycopeptides.. Its function is as follows. Peptidoglycan hydrolase involved in the splitting of the septum during cell division. In Staphylococcus epidermidis (strain ATCC 12228 / FDA PCI 1200), this protein is N-acetylmuramoyl-L-alanine amidase sle1 (sle1).